We begin with the raw amino-acid sequence, 215 residues long: ATP-dependent Clp protease proteolytic subunit (215 aa).

S115 (nucleophile) is an active-site residue. The active site involves H140.

This sequence belongs to the peptidase S14 family. As to quaternary structure, fourteen ClpP subunits assemble into 2 heptameric rings which stack back to back to give a disk-like structure with a central cavity, resembling the structure of eukaryotic proteasomes.

The protein localises to the cytoplasm. It catalyses the reaction Hydrolysis of proteins to small peptides in the presence of ATP and magnesium. alpha-casein is the usual test substrate. In the absence of ATP, only oligopeptides shorter than five residues are hydrolyzed (such as succinyl-Leu-Tyr-|-NHMec, and Leu-Tyr-Leu-|-Tyr-Trp, in which cleavage of the -Tyr-|-Leu- and -Tyr-|-Trp bonds also occurs).. Cleaves peptides in various proteins in a process that requires ATP hydrolysis. Has a chymotrypsin-like activity. Plays a major role in the degradation of misfolded proteins. The polypeptide is ATP-dependent Clp protease proteolytic subunit (Anaplasma marginale (strain Florida)).